Consider the following 146-residue polypeptide: Large ribosomal subunit protein uL22 (146 aa).

The protein belongs to the universal ribosomal protein uL22 family. As to quaternary structure, part of the 50S ribosomal subunit.

In terms of biological role, this protein binds specifically to 23S rRNA; its binding is stimulated by other ribosomal proteins, e.g. L4, L17, and L20. It is important during the early stages of 50S assembly. It makes multiple contacts with different domains of the 23S rRNA in the assembled 50S subunit and ribosome. Its function is as follows. The globular domain of the protein is located near the polypeptide exit tunnel on the outside of the subunit, while an extended beta-hairpin is found that lines the wall of the exit tunnel in the center of the 70S ribosome. The protein is Large ribosomal subunit protein uL22 of Nocardioides sp. (strain ATCC BAA-499 / JS614).